Here is a 104-residue protein sequence, read N- to C-terminus: Large ribosomal subunit protein uL23 (104 aa).

Belongs to the universal ribosomal protein uL23 family. In terms of assembly, part of the 50S ribosomal subunit. Contacts protein L29, and trigger factor when it is bound to the ribosome.

In terms of biological role, one of the early assembly proteins it binds 23S rRNA. One of the proteins that surrounds the polypeptide exit tunnel on the outside of the ribosome. Forms the main docking site for trigger factor binding to the ribosome. The sequence is that of Large ribosomal subunit protein uL23 from Polynucleobacter asymbioticus (strain DSM 18221 / CIP 109841 / QLW-P1DMWA-1) (Polynucleobacter necessarius subsp. asymbioticus).